A 200-amino-acid chain; its full sequence is GMP synthase [glutamine-hydrolyzing] subunit A (200 aa).

A Glutamine amidotransferase type-1 domain is found at 3–193 (KIYVVDNGGQ…IGICASYREI (191 aa)). Catalysis depends on Cys-80, which acts as the Nucleophile. Residues His-167 and Glu-169 contribute to the active site.

As to quaternary structure, heterodimer composed of a glutamine amidotransferase subunit (A) and a GMP-binding subunit (B).

It catalyses the reaction XMP + L-glutamine + ATP + H2O = GMP + L-glutamate + AMP + diphosphate + 2 H(+). The protein operates within purine metabolism; GMP biosynthesis; GMP from XMP (L-Gln route): step 1/1. Functionally, catalyzes the synthesis of GMP from XMP. In Thermoplasma acidophilum (strain ATCC 25905 / DSM 1728 / JCM 9062 / NBRC 15155 / AMRC-C165), this protein is GMP synthase [glutamine-hydrolyzing] subunit A.